The following is a 71-amino-acid chain: Cell division protein FtsB (71 aa).

The Cytoplasmic segment spans residues 1–3; the sequence is MKI. Residues 4–21 form a helical membrane-spanning segment; sequence LKIFLLSLLFWLQYSLWF. Over 22–71 the chain is Extracellular; it reads GKNGVLDFIKIYRRVTIEKKNNEYLDMRNNQIILEIENFNNHINKDKKKT.

This sequence belongs to the FtsB family.

It is found in the cell membrane. In terms of biological role, essential cell division protein. May link together the upstream cell division proteins, which are predominantly cytoplasmic, with the downstream cell division proteins, which are predominantly extracellular. The chain is Cell division protein FtsB from Buchnera aphidicola subsp. Acyrthosiphon pisum (strain APS) (Acyrthosiphon pisum symbiotic bacterium).